A 1462-amino-acid polypeptide reads, in one-letter code: DNA polymerase alpha catalytic subunit (1462 aa).

2 disordered regions span residues 1 to 33 (MAPV…GRQE) and 98 to 123 (DLED…KRNV). Positions 20-29 (RARREKKSKK) are enriched in basic residues. Residues 106–116 (ADEKGKDGKAR) are compositionally biased toward basic and acidic residues. The residue at position 174 (Thr174) is a Phosphothreonine. 3 positions are modified to phosphoserine: Ser186, Ser190, and Ser209. Lys224 bears the N6-acetyllysine mark. Residues 232 to 251 (DVQVESTEEEQESGAMEFED) form a disordered region. At Thr406 the chain carries Phosphothreonine. The tract at residues 650 to 715 (RINVCKAPHW…YHLSELVQQI (66 aa)) is DNA-binding. At Lys970 the chain carries N6-succinyllysine. The DNA-binding stretch occupies residues 1245–1376 (QFRVHHYHKD…TGPLCPACMK (132 aa)). Zn(2+)-binding residues include Cys1283, Cys1286, Cys1310, Cys1315, Cys1348, Cys1353, Cys1371, and Cys1374. The segment at 1283–1318 (CPTCGTENIYDNVFDGSGTDMEPSLYRCSNIDCKAS) adopts a CysA-type zinc-finger fold. Residues 1348 to 1374 (CEEPTCRNRTRHLPLQFSRTGPLCPAC) carry the CysB motif motif.

The protein belongs to the DNA polymerase type-B family. In terms of assembly, component of the alpha DNA polymerase complex (also known as the alpha DNA polymerase-primase complex) consisting of four subunits: the catalytic subunit POLA1, the regulatory subunit POLA2, and the primase complex subunits PRIM1 and PRIM2 respectively. Interacts with PARP1; this interaction functions as part of the control of replication fork progression. Interacts with MCM10 and WDHD1; these interactions recruit the polymerase alpha complex to the pre-replicative complex bound to DNA. Interacts with RPA1; this interaction stabilizes the replicative complex and reduces the misincorporation rate of DNA polymerase alpha by acting as a fidelity clamp. As to quaternary structure, (Microbial infection) Interacts with SV40 Large T antigen; this interaction allows viral DNA replication. (Microbial infection) Interacts with herpes simplex virus 1/HHV-1 replication origin-binding protein UL9. Post-translationally, a 165 kDa form is probably produced by proteolytic cleavage at Lys-124.

The protein resides in the nucleus. It is found in the cytoplasm. The protein localises to the cytosol. It catalyses the reaction DNA(n) + a 2'-deoxyribonucleoside 5'-triphosphate = DNA(n+1) + diphosphate. With respect to regulation, autoinhibited in apo-primosome, where the zinc motif of POLA1 and oligonucleotide/olicosaccharide-binding domain of POLA2 are placed into the active site blocking RNA:DNA duplex entry. Its function is as follows. Catalytic subunit of the DNA polymerase alpha complex (also known as the alpha DNA polymerase-primase complex) which plays an essential role in the initiation of DNA synthesis. During the S phase of the cell cycle, the DNA polymerase alpha complex (composed of a catalytic subunit POLA1, a regulatory subunit POLA2 and two primase subunits PRIM1 and PRIM2) is recruited to DNA at the replicative forks via direct interactions with MCM10 and WDHD1. The primase subunit of the polymerase alpha complex initiates DNA synthesis by oligomerising short RNA primers on both leading and lagging strands. These primers are initially extended by the polymerase alpha catalytic subunit and subsequently transferred to polymerase delta and polymerase epsilon for processive synthesis on the lagging and leading strand, respectively. The reason this transfer occurs is because the polymerase alpha has limited processivity and lacks intrinsic 3' exonuclease activity for proofreading error, and therefore is not well suited for replicating long complexes. In the cytosol, responsible for a substantial proportion of the physiological concentration of cytosolic RNA:DNA hybrids, which are necessary to prevent spontaneous activation of type I interferon responses. The polypeptide is DNA polymerase alpha catalytic subunit (POLA1) (Homo sapiens (Human)).